The primary structure comprises 204 residues: UPF0637 protein SAS1041 (204 aa).

This sequence belongs to the UPF0637 family.

The chain is UPF0637 protein SAS1041 from Staphylococcus aureus (strain MSSA476).